Here is a 194-residue protein sequence, read N- to C-terminus: A-type ATP synthase subunit E (194 aa).

This sequence belongs to the V-ATPase E subunit family. Has multiple subunits with at least A(3), B(3), C, D, E, F, H, I and proteolipid K(x).

The protein localises to the cell membrane. Functionally, component of the A-type ATP synthase that produces ATP from ADP in the presence of a proton gradient across the membrane. This chain is A-type ATP synthase subunit E, found in Saccharolobus solfataricus (strain ATCC 35092 / DSM 1617 / JCM 11322 / P2) (Sulfolobus solfataricus).